We begin with the raw amino-acid sequence, 255 residues long: Kallikrein-15 (255 aa).

A signal peptide spans 1 to 15 (MWLLLPLSFLLTSTA). The propeptide at 16–20 (QDGGK) is activation peptide. The tract at residues 21 to 253 (LLEGEECAPH…YVKWIRETMK (233 aa)) is serine protease. A disulfide bridge connects residues Cys46 and Cys62. Active-site charge relay system residues include His61 and Asp105. 3 cysteine pairs are disulfide-bonded: Cys137–Cys214, Cys179–Cys193, and Cys204–Cys229. N-linked (GlcNAc...) asparagine glycosylation is present at Asn170. Residue Ser208 is the Charge relay system of the active site. Asn231 carries an N-linked (GlcNAc...) asparagine glycan.

The protein belongs to the peptidase S1 family. Kallikrein subfamily.

It is found in the secreted. Protease whose physiological substrate is not yet known. The chain is Kallikrein-15 (KLK15) from Saguinus oedipus (Cotton-top tamarin).